The primary structure comprises 148 residues: Puroindoline-A (148 aa).

The N-terminal stretch at Met1 to Ala19 is a signal peptide. Positions Gln20 to Tyr28 are excised as a propeptide. A propeptide spans Tyr147 to Trp148 (removed in mature form).

Five disulfide bonds are present. As to expression, endosperm and aleurone layer of developing kernels. In the aleurone layer, mainly localized to starch granules and the surface of the plasma membrane, forming a uniform layer, also abundant in the intercellular space. In the endosperm, mainly localized to starch granules and the plasma membrane, but less abundant in the intercellular space. Not found in roots or coleoptiles.

The protein resides in the membrane. It is found in the secreted. It localises to the extracellular space. Acts as a membranotoxin, probably through its antibacterial and antifungal activities, contributing to the defense mechanism of the plant against predators. Forms monovalent cation-selective ion channels in membranes. Has antibacterial activity against the Gram-positive bacteria S.aureus and C.michiganensis, and the Gram-negative bacteria E.coli, P.syringae pv phaseoli, A.tumefaciens and E.carotovora subsp carotovora. Acts synergistically with PINB against bacteria. Contributes to grain texture and hardness. The polypeptide is Puroindoline-A (PINA) (Triticum aestivum (Wheat)).